Reading from the N-terminus, the 300-residue chain is NAD kinase (300 aa).

The active-site Proton acceptor is aspartate 75. Residues 75-76 (DG), 149-150 (ND), arginine 177, aspartate 179, 190-195 (TAYALS), alanine 214, and glutamine 248 contribute to the NAD(+) site.

This sequence belongs to the NAD kinase family. The cofactor is a divalent metal cation.

Its subcellular location is the cytoplasm. It catalyses the reaction NAD(+) + ATP = ADP + NADP(+) + H(+). In terms of biological role, involved in the regulation of the intracellular balance of NAD and NADP, and is a key enzyme in the biosynthesis of NADP. Catalyzes specifically the phosphorylation on 2'-hydroxyl of the adenosine moiety of NAD to yield NADP. In Paraburkholderia phytofirmans (strain DSM 17436 / LMG 22146 / PsJN) (Burkholderia phytofirmans), this protein is NAD kinase.